The sequence spans 207 residues: MSSDRQRSDDESPSTSSGSSDADQRDPAAPEPEEQEERKPSATQQKKNTKLSSKTTAKLSTSAKRIQKELAEITLDPPPNCSAGPKGDNIYEWRSTILGPPGSVYEGGVFFLDITFSSDYPFKPPKVTFRTRIYHCNINSQGVICLDILKDNWSPALTISKVLLSICSLLTDCNPADPLVGSIATQYLTNRAEHDRIARQWTKRYAT.

Residues Met-1 to Asp-10 show a composition bias toward basic and acidic residues. The disordered stretch occupies residues Met-1–Ala-63. At Ser-2 the chain carries N-acetylserine. Ser-8 is modified (phosphoserine). Residues Lys-50–Ala-63 are compositionally biased toward low complexity. The 147-residue stretch at Thr-61 to Thr-207 folds into the UBC core domain. The active-site Glycyl thioester intermediate is Cys-145.

It belongs to the ubiquitin-conjugating enzyme family. As to quaternary structure, the ubiquitin-loaded form interacts specifically with importin-11 (IPO11), leading to its import into the nucleus. Interacts with NEDD4L.

It localises to the nucleus. It is found in the cytoplasm. The catalysed reaction is S-ubiquitinyl-[E1 ubiquitin-activating enzyme]-L-cysteine + [E2 ubiquitin-conjugating enzyme]-L-cysteine = [E1 ubiquitin-activating enzyme]-L-cysteine + S-ubiquitinyl-[E2 ubiquitin-conjugating enzyme]-L-cysteine.. Its pathway is protein modification; protein ubiquitination. In terms of biological role, accepts ubiquitin from the E1 complex and catalyzes its covalent attachment to other proteins. In vitro catalyzes 'Lys-11'- and 'Lys-48'-, as well as 'Lys-63'-linked polyubiquitination. Participates in the regulation of transepithelial sodium transport in renal cells. In Bos taurus (Bovine), this protein is Ubiquitin-conjugating enzyme E2 E3 (UBE2E3).